A 515-amino-acid polypeptide reads, in one-letter code: SWI/SNF-related matrix-associated actin-dependent regulator of chromatin subfamily D member 1 (515 aa).

The disordered stretch occupies residues 1-103; sequence MAARAGFQSV…SGMDQSRKRP (103 aa). The span at 14–23 shows a compositional bias: gly residues; that stretch reads GGAGASGGAG. The interval 43-167 is interaction with ESR1, NR1H4, NR3C1, PGR and SMARCA4; the sequence is APGQGLYRSP…DQTIMRKRLD (125 aa). Asymmetric dimethylarginine occurs at positions 68 and 88. Lys101 participates in a covalent cross-link: Glycyl lysine isopeptide (Lys-Gly) (interchain with G-Cter in SUMO2). The interaction with SMARCC1 and SMARCC2 stretch occupies residues 168–474; that stretch reads IQEALKRPIK…TMTDVVGNPE (307 aa). The necessary for GR/NR3C1-mediated remodeling and transcription from chromatin; required for GR/NR3C1 interaction with the BRG1/SMARCA4 complex in vivo stretch occupies residues 180–515; that stretch reads RKLRIFISNT…LEQALGIRNT (336 aa). Residue Thr203 is modified to Phosphothreonine. Residue Lys223 is modified to N6-acetyllysine. One can recognise an SWIB/MDM2 domain in the interval 290–367; the sequence is YQPPQFKLDP…PQRLHALLMP (78 aa). The stretch at 412-440 forms a coiled coil; sequence ASQQEIATLDNKIHETIETINQLKTQREF.

The protein belongs to the SMARCD family. Component of the multiprotein chromatin-remodeling complexes SWI/SNF: SWI/SNF-A (BAF), SWI/SNF-B (PBAF) and related complexes. The canonical complex contains a catalytic subunit (either SMARCA4/BRG1/BAF190A or SMARCA2/BRM/BAF190B), and at least SMARCE1, ACTL6A/BAF53, SMARCC1/BAF155, SMARCC2/BAF170, and SMARCB1/SNF5/BAF47. Other subunits specific to each of the complexes may also be present permitting several possible combinations developmentally and tissue specific. Component of the BAF complex, which includes at least actin (ACTB), ARID1A/BAF250A, ARID1B/BAF250B, SMARCA2/BRM, SMARCA4/BRG1/BAF190A, ACTL6A/BAF53, ACTL6B/BAF53B, SMARCE1/BAF57, SMARCC1/BAF155, SMARCC2/BAF170, SMARCB1/SNF5/INI1, and one or more SMARCD1/BAF60A, SMARCD2/BAF60B, or SMARCD3/BAF60C. In muscle cells, the BAF complex also contains DPF3. Component of neural progenitors-specific chromatin remodeling complex (npBAF complex) composed of at least, ARID1A/BAF250A or ARID1B/BAF250B, SMARCD1/BAF60A, SMARCD3/BAF60C, SMARCA2/BRM/BAF190B, SMARCA4/BRG1/BAF190A, SMARCB1/BAF47, SMARCC1/BAF155, SMARCE1/BAF57, SMARCC2/BAF170, PHF10/BAF45A, ACTL6A/BAF53A and actin. Component of neuron-specific chromatin remodeling complex (nBAF complex) composed of at least, ARID1A/BAF250A or ARID1B/BAF250B, SMARCD1/BAF60A, SMARCD3/BAF60C, SMARCA2/BRM/BAF190B, SMARCA4/BRG1/BAF190A, SMARCB1/BAF47, SMARCC1/BAF155, SMARCE1/BAF57, SMARCC2/BAF170, DPF1/BAF45B, DPF3/BAF45C, ACTL6B/BAF53B and actin. Component of the SWI/SNF-B (PBAF) chromatin remodeling complex, at least composed of SMARCA4/BRG1, SMARCB1/BAF47/SNF5, ACTL6A/BAF53A or ACTL6B/BAF53B, SMARCE1/BAF57, SMARCD1/BAF60A, SMARCD2/BAF60B, perhaps SMARCD3/BAF60C, SMARCC1/BAF155, SMARCC2/BAF170, PBRM1/BAF180, ARID2/BAF200 and actin (ACTB). Component of SWI/SNF (GBAF) subcomplex, which includes at least BICRA or BICRAL (mutually exclusive), BRD9, SS18, SMARCA2/BRM, SMARCA4/BRG1/BAF190A, ACTL6A/BAF53, SMARCC1/BAF155, and SMARCD1/BAF60A. Specifically interacts with the VDR heterodimer complex. Interacts with ESR1, NR3C1, NR1H4, PGR, SMARCA4, SMARCC1 and SMARCC2. Interacts with DPF2. Interacts with DPF3a (isoform 2 of DPF3/BAF45C) and with HDGFL2 in a DPF3a-dependent manner. Interacts with FOS, FOSB isoform 1 and 2, FOSL1 and FOSL2. In terms of tissue distribution, expressed in all tissues tested, including brain, heart, kidney, liver, lung, muscle, pancreas and placenta.

It localises to the nucleus. Its function is as follows. Involved in transcriptional activation and repression of select genes by chromatin remodeling (alteration of DNA-nucleosome topology). Component of SWI/SNF chromatin remodeling complexes that carry out key enzymatic activities, changing chromatin structure by altering DNA-histone contacts within a nucleosome in an ATP-dependent manner. Belongs to the neural progenitors-specific chromatin remodeling complex (npBAF complex) and the neuron-specific chromatin remodeling complex (nBAF complex). During neural development a switch from a stem/progenitor to a postmitotic chromatin remodeling mechanism occurs as neurons exit the cell cycle and become committed to their adult state. The transition from proliferating neural stem/progenitor cells to postmitotic neurons requires a switch in subunit composition of the npBAF and nBAF complexes. As neural progenitors exit mitosis and differentiate into neurons, npBAF complexes which contain ACTL6A/BAF53A and PHF10/BAF45A, are exchanged for homologous alternative ACTL6B/BAF53B and DPF1/BAF45B or DPF3/BAF45C subunits in neuron-specific complexes (nBAF). The npBAF complex is essential for the self-renewal/proliferative capacity of the multipotent neural stem cells. The nBAF complex along with CREST plays a role regulating the activity of genes essential for dendrite growth. Has a strong influence on vitamin D-mediated transcriptional activity from an enhancer vitamin D receptor element (VDRE). May be a link between mammalian SWI-SNF-like chromatin remodeling complexes and the vitamin D receptor (VDR) heterodimer. Mediates critical interactions between nuclear receptors and the BRG1/SMARCA4 chromatin-remodeling complex for transactivation. Interacts with AKIRIN2. The sequence is that of SWI/SNF-related matrix-associated actin-dependent regulator of chromatin subfamily D member 1 from Homo sapiens (Human).